A 60-amino-acid polypeptide reads, in one-letter code: Metallothionein B (60 aa).

A beta region spans residues 1 to 28 (MDPCECSKSGTCNCGGSCTCTNCSCTSC). Positions 4, 6, 12, 14, 18, 20, 23, 25, 28, 32, 33, 35, 36, 40, 43, 47, 49, 54, 58, and 59 each coordinate a divalent metal cation. Residues 29-60 (KKSCCPCCPSGCTKCASGCVCKGKTCDTSCCQ) are alpha.

It belongs to the metallothionein superfamily. Type 1 family.

Functionally, metallothioneins have a high content of cysteine residues that bind various heavy metals. The protein is Metallothionein B (mtb) of Trematomus bernacchii (Emerald rockcod).